Here is a 400-residue protein sequence, read N- to C-terminus: Enoyl-[acyl-carrier-protein] reductase [NADH] (400 aa).

NAD(+) contacts are provided by residues 48 to 53 (GASSGY), 74 to 75 (FE), 111 to 112 (DA), and 139 to 140 (LA). Tyr-225 lines the substrate pocket. Tyr-235 acts as the Proton donor in catalysis. NAD(+) is bound by residues Lys-244 and 273–275 (VVT).

It belongs to the TER reductase family. As to quaternary structure, monomer.

The catalysed reaction is a 2,3-saturated acyl-[ACP] + NAD(+) = a (2E)-enoyl-[ACP] + NADH + H(+). The protein operates within lipid metabolism; fatty acid biosynthesis. Involved in the final reduction of the elongation cycle of fatty acid synthesis (FAS II). Catalyzes the reduction of a carbon-carbon double bond in an enoyl moiety that is covalently linked to an acyl carrier protein (ACP). The protein is Enoyl-[acyl-carrier-protein] reductase [NADH] of Marinomonas sp. (strain MWYL1).